The primary structure comprises 343 residues: Follistatin (343 aa).

The signal sequence occupies residues Met1–Ala28. Residues Gly29–Gly102 form the TB domain. 8 cysteine pairs are disulfide-bonded: Cys31-Cys54, Cys41-Cys87, Cys55-Cys90, Cys94-Cys105, Cys99-Cys115, Cys117-Cys149, Cys121-Cys142, and Cys131-Cys163. A Follistatin-like 1 domain is found at Thr93–Val116. Kazal-like domains follow at residues Cys99–Lys165, Asn185–Lys240, and Arg263–Ser317. The N-linked (GlcNAc...) asparagine glycan is linked to Asn123. A Follistatin-like 2 domain is found at Thr166–Val189. 3 disulfide bridges follow: Cys191-Cys224, Cys195-Cys217, and Cys206-Cys238. The Follistatin-like 3 domain maps to Ser243 to Ala267. Disulfide bonds link Cys269–Cys301, Cys273–Cys294, and Cys283–Cys315. Asn287 carries an N-linked (GlcNAc...) asparagine glycan. Residues Cys315 to Trp343 form a disordered region. Acidic residues predominate over residues Glu320 to Asp332.

In terms of assembly, monomer. In terms of tissue distribution, ciliary ganglion neurons. Levels are higher in the iris than the choroid.

It is found in the secreted. Functionally, binds directly to activin and functions as an activin antagonist. Inhibits activin A signaling in the iris and regulates somatostatin phenotype in ciliary ganglion neurons. Specific inhibitor of the biosynthesis and secretion of pituitary follicle stimulating hormone (FSH). This is Follistatin (FST) from Gallus gallus (Chicken).